Consider the following 135-residue polypeptide: Early nodulin-5 (135 aa).

Residues 1 to 23 form the signal peptide; the sequence is MASSSSPIFLMIIFSMWLLFSYS.

As to expression, invasion zone and early symbiotic zone.

Its function is as follows. Involved in the infection process during the plant-rhizobium interaction. The protein is Early nodulin-5 (ENOD5) of Pisum sativum (Garden pea).